A 151-amino-acid chain; its full sequence is Natriuretic peptides A (151 aa).

Residues 1–25 (MSSFSTTTVSFLLLLAFQLLGQTRA) form the signal peptide. The disordered stretch occupies residues 62 to 105 (VLSEPNEEAGAALSPLPEVPPWTGEVSPAQRDGGALGRGPWDSS). Positions 93–103 (DGGALGRGPWD) are excised as a propeptide. Serine 129 carries the post-translational modification Phosphoserine. The cysteines at positions 130 and 146 are disulfide-linked. The interval 147-151 (NSFRY) is important for degradation of atrial natriuretic peptide by IDE.

Belongs to the natriuretic peptide family. As to quaternary structure, homodimer; disulfide-linked antiparallel dimer. The precursor molecule is proteolytically cleaved by CORIN at Arg-123 to produce atrial natriuretic peptide. Undergoes further proteolytic cleavage by unknown proteases to give rise to long-acting natriuretic peptide, vessel dilator and kaliuretic peptide. Additional processing gives rise to the auriculin and atriopeptin peptides. In the kidneys, alternative processing by an unknown protease results in the peptide urodilatin. In terms of processing, cleavage by MME initiates degradation of the factor and thereby regulates its activity. Degraded by IDE (in vitro). During IDE degradation, the resulting products can temporarily stimulate NPR2 to produce cGMP, before the fragments are completely degraded and inactivated by IDE (in vitro). Post-translationally, degraded by IDE. Phosphorylation on Ser-129 decreases vasorelaxant activity. As to expression, detected in the kidney distal tubular cells (at protein level). Present in urine (at protein level). Detected in atrial and ventricular plasma samples, and in adipocytes (at protein level). Detected in urine in one study. However, was not detected in urine in another study. In the brain, predominantly expressed in the gray matter with very weak expression in the white matter (at protein level). Localizes to astrocyte-like structures throughout the white matter, and in the cerebral vessels detected in the leptomeningeal and parenchymal vessels, and endothelium and smooth muscle layers (at protein level). Relatively low levels of expression in the kidneys compared to urodilatin (at protein level).

The protein localises to the secreted. The protein resides in the perikaryon. It localises to the cell projection. In terms of biological role, hormone that plays a key role in mediating cardio-renal homeostasis, and is involved in vascular remodeling and regulating energy metabolism. Acts by specifically binding and stimulating NPR1 to produce cGMP, which in turn activates effector proteins, such as PRKG1, that drive various biological responses. Regulates vasodilation, natriuresis, diuresis and aldosterone synthesis and is therefore essential for regulating blood pressure, controlling the extracellular fluid volume and maintaining the fluid-electrolyte balance. Also involved in inhibiting cardiac remodeling and cardiac hypertrophy by inducing cardiomyocyte apoptosis and attenuating the growth of cardiomyocytes and fibroblasts. Plays a role in female pregnancy by promoting trophoblast invasion and spiral artery remodeling in uterus, and thus prevents pregnancy-induced hypertension. In adipose tissue, acts in various cGMP- and PKG-dependent pathways to regulate lipid metabolism and energy homeostasis. This includes up-regulating lipid metabolism and mitochondrial oxygen utilization by activating the AMP-activated protein kinase (AMPK), and increasing energy expenditure by acting via MAPK11 to promote the UCP1-dependent thermogenesis of brown adipose tissue. Binds the clearance receptor NPR3 which removes the hormone from circulation. May have a role in cardio-renal homeostasis through regulation of natriuresis, diuresis, vasodilation, and inhibiting aldosterone synthesis. In vitro, promotes the production of cGMP and induces vasodilation. May promote natriuresis, at least in part, by enhancing prostaglandin E2 synthesis resulting in the inhibition of renal Na+-K+-ATPase. However reports on the involvement of this peptide in mammal blood volume and blood pressure homeostasis are conflicting; according to a report, in vivo it is not sufficient to activate cGMP and does not inhibit collecting duct transport nor effect diuresis and natriuresis. Appears to bind to specific receptors that are distinct from the receptors bound by atrial natriuretic peptide and vessel dilator. Possibly enhances protein excretion in urine by decreasing proximal tubular protein reabsorption. Its function is as follows. May have a role in cardio-renal homeostasis through regulation of natriuresis, diuresis, and vasodilation. In vitro, promotes the production of cGMP and induces vasodilation. May promote natriuresis, at least in part, by enhancing prostaglandin E2 synthesis resulting in the inhibition of renal Na+-K+-ATPase. However reports on the involvement of this peptide in mammal blood volume and blood pressure homeostasis are conflicting; according to a report it is not sufficient to activate cGMP and does not inhibit collecting duct transport nor effect diuresis and natriuresis. Appears to bind to specific receptors that are distinct from the receptors bound by the atrial natriuretic and long-acting natriuretic peptides. Possibly functions in protein excretion in urine by maintaining the integrity of the proximal tubules and enhancing protein excretion by decreasing proximal tubular protein reabsorption. Functionally, may have a role in cardio-renal homeostasis through regulation of diuresis and inhibiting aldosterone synthesis. In vitro, promotes the production of cGMP and induces vasodilation. May promote natriuresis, at least in part, by enhancing prostaglandin E2 synthesis resulting in the inhibition of renal Na+-K+-ATPase. May have a role in potassium excretion but not sodium excretion (natriuresis). Possibly enhances protein excretion in urine by decreasing proximal tubular protein reabsorption. In terms of biological role, hormone produced in the kidneys that appears to be important for maintaining cardio-renal homeostasis. Mediates vasodilation, natriuresis and diuresis primarily in the renal system, in order to maintain the extracellular fluid volume and control the fluid-electrolyte balance. Specifically binds and stimulates cGMP production by renal transmembrane receptors, likely NPR1. Urodilatin not ANP, may be the natriuretic peptide responsible for the regulation of sodium and water homeostasis in the kidney. May have a role in cardio-renal homeostasis through regulation of natriuresis and vasodilation. In vivo promotes natriuresis and in vitro, vasodilates renal artery strips. Its function is as follows. May have a role in cardio-renal homeostasis through regulation of regulation of natriuresis and vasodilation. In vivo promotes natriuresis. In vitro, vasodilates intestinal smooth muscle but not smooth muscle strips. Functionally, may have a role in cardio-renal homeostasis through regulation of natriuresis and vasodilation. In vivo promotes natriuresis. In vitro, selectively vasodilates intestinal and vascular smooth muscle strips. In terms of biological role, may have a role in cardio-renal homeostasis through regulation of natriuresis and vasodilation. In vivo promotes natriuresis. In vitro, selectively vasodilates intestinal smooth muscle but not vascular smooth muscle strips. This is Natriuretic peptides A (NPPA) from Homo sapiens (Human).